A 474-amino-acid chain; its full sequence is Ribulose bisphosphate carboxylase large chain (474 aa).

Substrate contacts are provided by N122 and T172. Catalysis depends on K174, which acts as the Proton acceptor. K176 contacts substrate. Residues K200, D202, and E203 each contribute to the Mg(2+) site. Position 200 is an N6-carboxylysine (K200). The active-site Proton acceptor is the H293. Substrate is bound by residues R294, H326, and S378.

The protein belongs to the RuBisCO large chain family. Type I subfamily. Heterohexadecamer of 8 large chains and 8 small chains; disulfide-linked. The disulfide link is formed within the large subunit homodimers. It depends on Mg(2+) as a cofactor. The disulfide bond which can form in the large chain dimeric partners within the hexadecamer appears to be associated with oxidative stress and protein turnover.

The protein localises to the carboxysome. The catalysed reaction is 2 (2R)-3-phosphoglycerate + 2 H(+) = D-ribulose 1,5-bisphosphate + CO2 + H2O. It carries out the reaction D-ribulose 1,5-bisphosphate + O2 = 2-phosphoglycolate + (2R)-3-phosphoglycerate + 2 H(+). RuBisCO catalyzes two reactions: the carboxylation of D-ribulose 1,5-bisphosphate, the primary event in carbon dioxide fixation, as well as the oxidative fragmentation of the pentose substrate in the photorespiration process. Both reactions occur simultaneously and in competition at the same active site. The protein is Ribulose bisphosphate carboxylase large chain of Gloeobacter violaceus (strain ATCC 29082 / PCC 7421).